The primary structure comprises 237 residues: Ribosomal RNA small subunit methyltransferase G (237 aa).

S-adenosyl-L-methionine contacts are provided by residues Gly-76, Phe-81, 128 to 129 (VE), and Arg-147.

Belongs to the methyltransferase superfamily. RNA methyltransferase RsmG family.

Its subcellular location is the cytoplasm. Functionally, specifically methylates the N7 position of a guanine in 16S rRNA. The sequence is that of Ribosomal RNA small subunit methyltransferase G from Prochlorococcus marinus (strain AS9601).